The following is a 154-amino-acid chain: Ribosomal RNA large subunit methyltransferase H (154 aa).

Glycine 102 contacts S-adenosyl-L-methionine.

The protein belongs to the RNA methyltransferase RlmH family. Homodimer.

It is found in the cytoplasm. The enzyme catalyses pseudouridine(1915) in 23S rRNA + S-adenosyl-L-methionine = N(3)-methylpseudouridine(1915) in 23S rRNA + S-adenosyl-L-homocysteine + H(+). Functionally, specifically methylates the pseudouridine at position 1915 (m3Psi1915) in 23S rRNA. This Phenylobacterium zucineum (strain HLK1) protein is Ribosomal RNA large subunit methyltransferase H.